Reading from the N-terminus, the 131-residue chain is Small ribosomal subunit protein bS6 (131 aa).

The disordered stretch occupies residues 100–131; that stretch reads SPMVKAKDERRSRDYSLEDANMDAEEAGDSEE. The segment covering 104-115 has biased composition (basic and acidic residues); it reads KAKDERRSRDYS. Residues 119–131 are compositionally biased toward acidic residues; it reads ANMDAEEAGDSEE.

The protein belongs to the bacterial ribosomal protein bS6 family.

Functionally, binds together with bS18 to 16S ribosomal RNA. The sequence is that of Small ribosomal subunit protein bS6 from Photorhabdus laumondii subsp. laumondii (strain DSM 15139 / CIP 105565 / TT01) (Photorhabdus luminescens subsp. laumondii).